Here is a 1022-residue protein sequence, read N- to C-terminus: Translation initiation factor IF-2 (1022 aa).

Over residues 82-94 (EQSRKTLEKEQHL) the composition is skewed to basic and acidic residues. 2 disordered regions span residues 82–129 (EQSR…AVPA) and 342–436 (SENK…QREL). Residues 104-115 (ASKSSAKGSESA) are compositionally biased toward low complexity. Residues 375–384 (KAKKGKKKKK) show a composition bias toward basic residues. Over residues 421–436 (SEREREQEEGAAQREL) the composition is skewed to basic and acidic residues. Positions 519 to 689 (TRPPVVTIMG…LTEAELRELK (171 aa)) constitute a tr-type G domain. Positions 528-535 (GHVDHGKT) are G1. GTP is bound at residue 528–535 (GHVDHGKT). The interval 553-557 (GITQH) is G2. The interval 575–578 (DTPG) is G3. GTP contacts are provided by residues 575–579 (DTPGH) and 629–632 (NKID). Residues 629–632 (NKID) are G4. Residues 665-667 (SAK) are G5.

It belongs to the TRAFAC class translation factor GTPase superfamily. Classic translation factor GTPase family. IF-2 subfamily.

It localises to the cytoplasm. One of the essential components for the initiation of protein synthesis. Protects formylmethionyl-tRNA from spontaneous hydrolysis and promotes its binding to the 30S ribosomal subunits. Also involved in the hydrolysis of GTP during the formation of the 70S ribosomal complex. The sequence is that of Translation initiation factor IF-2 from Chlorobium chlorochromatii (strain CaD3).